The sequence spans 188 residues: Large ribosomal subunit protein eL18 (188 aa).

Positions 153–188 (GKAPGTPHSHTKPYIRSKGRKFERARGRRASRGYKN) are disordered. Basic residues-rich tracts occupy residues 161–171 (SHTKPYIRSKG) and 178–188 (RGRRASRGYKN).

This sequence belongs to the eukaryotic ribosomal protein eL18 family. In terms of assembly, component of the large ribosomal subunit.

The protein resides in the cytoplasm. Its subcellular location is the cytosol. The protein localises to the rough endoplasmic reticulum. In terms of biological role, component of the large ribosomal subunit. The ribosome is a large ribonucleoprotein complex responsible for the synthesis of proteins in the cell. The chain is Large ribosomal subunit protein eL18 (rpl18) from Ictalurus punctatus (Channel catfish).